Here is a 545-residue protein sequence, read N- to C-terminus: Cytosolic Fe-S cluster assembly factor NAR1 (545 aa).

The [4Fe-4S] cluster site is built by Cys20, Cys72, Cys75, Cys78, Cys186, and Cys241. The disordered stretch occupies residues 401–438 (PSTKQTSTVKANPLASRRRARLASKTDGTASSNNATQD). Positions 426–438 (TDGTASSNNATQD) are enriched in polar residues. Residues Cys453 and Cys457 each contribute to the [4Fe-4S] cluster site.

This sequence belongs to the NARF family.

Component of the cytosolic Fe/S protein assembly machinery. Required for maturation of extramitochondrial Fe/S proteins. May play a role in the transfer of pre-assembled Fe/S clusters to target apoproteins. The chain is Cytosolic Fe-S cluster assembly factor NAR1 (NAR1) from Debaryomyces hansenii (strain ATCC 36239 / CBS 767 / BCRC 21394 / JCM 1990 / NBRC 0083 / IGC 2968) (Yeast).